Reading from the N-terminus, the 117-residue chain is Large ribosomal subunit protein bL19 (117 aa).

This sequence belongs to the bacterial ribosomal protein bL19 family.

Functionally, this protein is located at the 30S-50S ribosomal subunit interface and may play a role in the structure and function of the aminoacyl-tRNA binding site. The polypeptide is Large ribosomal subunit protein bL19 (Desulfotalea psychrophila (strain LSv54 / DSM 12343)).